The sequence spans 451 residues: Chromosomal replication initiator protein DnaA (451 aa).

The domain I, interacts with DnaA modulators stretch occupies residues 1–72 (MSLPTSLWDK…TELLDELSDT (72 aa)). Positions 72–114 (TPPQIRLQIGSRSTEMPTKNSHEPSHRKAAAPPAGTTISHTQA) are domain II. The segment covering 81–90 (GSRSTEMPTK) has biased composition (polar residues). Residues 81-106 (GSRSTEMPTKNSHEPSHRKAAAPPAG) form a disordered region. The interval 115-331 (NINSNFTFDS…GALKRVIANA (217 aa)) is domain III, AAA+ region. 4 residues coordinate ATP: Gly159, Gly161, Lys162, and Thr163. Residues 332–451 (HFTGQSITVD…YKNLMRILSG (120 aa)) form a domain IV, binds dsDNA region.

The protein belongs to the DnaA family. Oligomerizes as a right-handed, spiral filament on DNA at oriC.

It is found in the cytoplasm. In terms of biological role, plays an essential role in the initiation and regulation of chromosomal replication. ATP-DnaA binds to the origin of replication (oriC) to initiate formation of the DNA replication initiation complex once per cell cycle. Binds the DnaA box (a 9 base pair repeat at the origin) and separates the double-stranded (ds)DNA. Forms a right-handed helical filament on oriC DNA; dsDNA binds to the exterior of the filament while single-stranded (ss)DNA is stabiized in the filament's interior. The ATP-DnaA-oriC complex binds and stabilizes one strand of the AT-rich DNA unwinding element (DUE), permitting loading of DNA polymerase. After initiation quickly degrades to an ADP-DnaA complex that is not apt for DNA replication. Binds acidic phospholipids. The sequence is that of Chromosomal replication initiator protein DnaA from Coxiella burnetii (strain CbuK_Q154) (Coxiella burnetii (strain Q154)).